Here is a 283-residue protein sequence, read N- to C-terminus: Elongation factor Ts (283 aa).

The involved in Mg(2+) ion dislocation from EF-Tu stretch occupies residues 79 to 82 (TDFV).

The protein belongs to the EF-Ts family.

It localises to the cytoplasm. Associates with the EF-Tu.GDP complex and induces the exchange of GDP to GTP. It remains bound to the aminoacyl-tRNA.EF-Tu.GTP complex up to the GTP hydrolysis stage on the ribosome. This chain is Elongation factor Ts, found in Pseudoalteromonas translucida (strain TAC 125).